The primary structure comprises 368 residues: UDP-N-acetylglucosamine--N-acetylmuramyl-(pentapeptide) pyrophosphoryl-undecaprenol N-acetylglucosamine transferase (368 aa).

UDP-N-acetyl-alpha-D-glucosamine is bound by residues 10-12 (TGG), Asn-126, Ser-200, Ile-255, and Gln-300.

This sequence belongs to the glycosyltransferase 28 family. MurG subfamily.

Its subcellular location is the cell membrane. It catalyses the reaction Mur2Ac(oyl-L-Ala-gamma-D-Glu-L-Lys-D-Ala-D-Ala)-di-trans,octa-cis-undecaprenyl diphosphate + UDP-N-acetyl-alpha-D-glucosamine = beta-D-GlcNAc-(1-&gt;4)-Mur2Ac(oyl-L-Ala-gamma-D-Glu-L-Lys-D-Ala-D-Ala)-di-trans,octa-cis-undecaprenyl diphosphate + UDP + H(+). Its pathway is cell wall biogenesis; peptidoglycan biosynthesis. In terms of biological role, cell wall formation. Catalyzes the transfer of a GlcNAc subunit on undecaprenyl-pyrophosphoryl-MurNAc-pentapeptide (lipid intermediate I) to form undecaprenyl-pyrophosphoryl-MurNAc-(pentapeptide)GlcNAc (lipid intermediate II). This is UDP-N-acetylglucosamine--N-acetylmuramyl-(pentapeptide) pyrophosphoryl-undecaprenol N-acetylglucosamine transferase from Lactobacillus helveticus (strain DPC 4571).